A 173-amino-acid chain; its full sequence is uncharacterized protein (173 aa).

The next 4 membrane-spanning stretches (helical) occupy residues 13–35 (LQVI…PLLS), 50–72 (IIFI…FLGL), 107–129 (NYLI…KYLL), and 139–161 (GYLI…RLIL).

The protein resides in the cell membrane. This is an uncharacterized protein from Rickettsia prowazekii (strain Madrid E).